A 192-amino-acid polypeptide reads, in one-letter code: Ion-translocating oxidoreductase complex subunit B (192 aa).

Residues 1–26 are hydrophobic; that stretch reads MNTIWIAVGALALLGLVFGAILGYAS. Residues 32 to 91 enclose the 4Fe-4S domain; sequence EDDPVVEKIDAILPQSQCGQCGYPGCRPYAEAVGLQGEKINRCAPGGEAVMLKIAELLNV. [4Fe-4S] cluster contacts are provided by Cys-49, Cys-52, Cys-57, Cys-74, Cys-117, Cys-120, Cys-123, Cys-127, Cys-147, Cys-150, Cys-153, and Cys-157. 4Fe-4S ferredoxin-type domains lie at 108 to 137 and 138 to 167; these read MLAV…GATR and AMHT…LRPV.

The protein belongs to the 4Fe4S bacterial-type ferredoxin family. RnfB subfamily. In terms of assembly, the complex is composed of six subunits: RsxA, RsxB, RsxC, RsxD, RsxE and RsxG. Requires [4Fe-4S] cluster as cofactor.

It localises to the cell inner membrane. Part of a membrane-bound complex that couples electron transfer with translocation of ions across the membrane. Required to maintain the reduced state of SoxR. This Salmonella newport (strain SL254) protein is Ion-translocating oxidoreductase complex subunit B.